Consider the following 187-residue polypeptide: UPF0301 protein YqgE (187 aa).

This sequence belongs to the UPF0301 (AlgH) family.

This is UPF0301 protein YqgE from Salmonella choleraesuis (strain SC-B67).